The chain runs to 344 residues: Anthranilate phosphoribosyltransferase 2 (344 aa).

5-phospho-alpha-D-ribose 1-diphosphate contacts are provided by residues Gly81, 84–85 (GD), Thr89, 91–94 (NIST), 109–117 (KHGNRALSS), and Ala121. Position 81 (Gly81) interacts with anthranilate. Ser93 is a binding site for Mg(2+). Asn112 is an anthranilate binding site. Anthranilate is bound at residue Arg167. Asp226 and Glu227 together coordinate Mg(2+).

The protein belongs to the anthranilate phosphoribosyltransferase family. Homodimer. The cofactor is Mg(2+).

The enzyme catalyses N-(5-phospho-beta-D-ribosyl)anthranilate + diphosphate = 5-phospho-alpha-D-ribose 1-diphosphate + anthranilate. Its pathway is amino-acid biosynthesis; L-tryptophan biosynthesis; L-tryptophan from chorismate: step 2/5. In terms of biological role, catalyzes the transfer of the phosphoribosyl group of 5-phosphorylribose-1-pyrophosphate (PRPP) to anthranilate to yield N-(5'-phosphoribosyl)-anthranilate (PRA). The polypeptide is Anthranilate phosphoribosyltransferase 2 (Ralstonia nicotianae (strain ATCC BAA-1114 / GMI1000) (Ralstonia solanacearum)).